The primary structure comprises 98 residues: Complement inhibitor RaCI2 (98 aa).

The N-terminal stretch at 1–21 (MNAVTVLAFTAFALIVHDCYS) is a signal peptide. 3 disulfide bridges follow: Cys-35/Cys-59, Cys-40/Cys-61, and Cys-55/Cys-76.

Belongs to the RaCI family. Expressed in salivary glands.

Its subcellular location is the secreted. Its function is as follows. Complement inhibitor. Prevents complement-mediated C5 activation by binding to C5. Binds C5 at a different binding site than the other tick complement inhibitors OmCI and CirpT1, and the drug eculizumab. In Rhipicephalus microplus (Cattle tick), this protein is Complement inhibitor RaCI2.